Here is a 365-residue protein sequence, read N- to C-terminus: MSTSTLSDGSLDEGTFAAEDVSGVIEDYFFEGAEKLLEIWFDKNQNGATSLRNIPYSELVSMLDIAQCRILHSKSNECMDSYVLSESSMFISDFRIILKTCGTTRLLHAIERILHIAKIYCNMDNVVSVFYSRKNFMHPEKQPYPHSSFETEVDYLEEHFAGGSAYCIGPQRQDRWFLYTMVTPQAVFPFPEHTLEILMNGLPEDVLSTFSPNVSKDGKDCRMKSAINTILPPDIVVHEELFSPCGYSLNGLIPHSDHYITIHVTPEPDFSYVSFETNQHTLNLCEQMLKVLEIFKPSKFLLTIFTNELSNEGKKMQKNLWDLKICGCRRTNLQFLELPTETLIYVQFERIKSAEQVTCKEVFDR.

Residues Glu-31 and Glu-34 contribute to the active site. The Schiff-base intermediate with substrate; via pyruvic acid role is filled by Ser-87. Ser-87 is modified (pyruvic acid (Ser); by autocatalysis). Residue Cys-101 is the Proton donor; for catalytic activity of the active site. Residues Ser-248 and His-263 each act as proton acceptor; for processing activity in the active site.

This sequence belongs to the eukaryotic AdoMetDC family. As to quaternary structure, heterotetramer of two alpha and two beta chains. Requires pyruvate as cofactor. In terms of processing, is synthesized initially as an inactive proenzyme. Formation of the active enzyme involves a self-maturation process in which the active site pyruvoyl group is generated from an internal serine residue via an autocatalytic post-translational modification. Two non-identical subunits are generated from the proenzyme in this reaction, and the pyruvate is formed at the N-terminus of the alpha chain, which is derived from the carboxyl end of the proenzyme. The post-translation cleavage follows an unusual pathway, termed non-hydrolytic serinolysis, in which the side chain hydroxyl group of the serine supplies its oxygen atom to form the C-terminus of the beta chain, while the remainder of the serine residue undergoes an oxidative deamination to produce ammonia and the pyruvoyl group blocking the N-terminus of the alpha chain.

It catalyses the reaction S-adenosyl-L-methionine + H(+) = S-adenosyl 3-(methylsulfanyl)propylamine + CO2. The protein operates within amine and polyamine biosynthesis; S-adenosylmethioninamine biosynthesis; S-adenosylmethioninamine from S-adenosyl-L-methionine: step 1/1. In Onchocerca volvulus, this protein is S-adenosylmethionine decarboxylase proenzyme (smd-1).